The following is a 340-amino-acid chain: Anthocyanidin reductase (340 aa).

Lys49 and Tyr169 together coordinate NADP(+).

The protein belongs to the NAD(P)-dependent epimerase/dehydratase family. Dihydroflavonol-4-reductase subfamily. As to quaternary structure, homo- or heterodimer. In terms of tissue distribution, flowers and young siliques. Detected specifically in the endothelium of seed coat.

It carries out the reaction a (2R,3R)-flavan-3-ol + 2 NAD(+) = an anthocyanidin with a 3-hydroxy group + 2 NADH + 2 H(+). It catalyses the reaction a (2R,3R)-flavan-3-ol + 2 NADP(+) = an anthocyanidin with a 3-hydroxy group + 2 NADPH + 2 H(+). It functions in the pathway secondary metabolite biosynthesis; flavonoid biosynthesis. With respect to regulation, inhibited by (+)-catechin, quercetin and (+)- and (-)-dihydroquercetin. Not inhibited by salt. Positive cooperativity with NADPH acting as cosubstrate and modulator. Its function is as follows. Involved in the biosynthesis of condensed tannins. Converts cyanidin into (-)-epicatechin as the major product. The polypeptide is Anthocyanidin reductase (BAN) (Arabidopsis thaliana (Mouse-ear cress)).